An 83-amino-acid chain; its full sequence is Large ribosomal subunit protein eL43 (83 aa).

The Zn(2+) site is built by cysteine 38, cysteine 41, cysteine 56, and cysteine 59. The segment at 38–59 (CPVCGRRAVRRISTGIWQCKKC) adopts a C4-type zinc-finger fold.

Belongs to the eukaryotic ribosomal protein eL43 family. Putative zinc-binding subfamily. As to quaternary structure, part of the 50S ribosomal subunit. Zn(2+) is required as a cofactor.

Its function is as follows. Binds to the 23S rRNA. This chain is Large ribosomal subunit protein eL43, found in Pyrococcus abyssi (strain GE5 / Orsay).